Here is a 208-residue protein sequence, read N- to C-terminus: MNQIPQHKSLVIGLTGGIASGKSAAAAKFVELDIPCIDADQVARDVVEPGEPALQHIAEHFGSALITPNGVLDRAALRKLVFNDPEQKKWLESLLHPLINQRIRDWLGACKTPYCILASPLLLETRQRELVDRILVIDVPESVQIARAMARDQNSEDLVRRIIATQSGREYKRQHADDIILNDKDLAHLYHEVAKLHEYYLELAQHDR.

Residues 11 to 207 (VIGLTGGIAS…EYYLELAQHD (197 aa)) enclose the DPCK domain. Position 19–24 (19–24 (ASGKSA)) interacts with ATP.

This sequence belongs to the CoaE family.

The protein localises to the cytoplasm. It catalyses the reaction 3'-dephospho-CoA + ATP = ADP + CoA + H(+). The protein operates within cofactor biosynthesis; coenzyme A biosynthesis; CoA from (R)-pantothenate: step 5/5. In terms of biological role, catalyzes the phosphorylation of the 3'-hydroxyl group of dephosphocoenzyme A to form coenzyme A. The polypeptide is Dephospho-CoA kinase (Hahella chejuensis (strain KCTC 2396)).